A 154-amino-acid polypeptide reads, in one-letter code: D-aminoacyl-tRNA deacylase (154 aa).

The Gly-cisPro motif, important for rejection of L-amino acids motif lies at 138–139 (GP).

It belongs to the DTD family. As to quaternary structure, homodimer.

The protein localises to the cytoplasm. It carries out the reaction glycyl-tRNA(Ala) + H2O = tRNA(Ala) + glycine + H(+). The enzyme catalyses a D-aminoacyl-tRNA + H2O = a tRNA + a D-alpha-amino acid + H(+). Functionally, an aminoacyl-tRNA editing enzyme that deacylates mischarged D-aminoacyl-tRNAs. Also deacylates mischarged glycyl-tRNA(Ala), protecting cells against glycine mischarging by AlaRS. Acts via tRNA-based rather than protein-based catalysis; rejects L-amino acids rather than detecting D-amino acids in the active site. By recycling D-aminoacyl-tRNA to D-amino acids and free tRNA molecules, this enzyme counteracts the toxicity associated with the formation of D-aminoacyl-tRNA entities in vivo and helps enforce protein L-homochirality. In Halorhodospira halophila (strain DSM 244 / SL1) (Ectothiorhodospira halophila (strain DSM 244 / SL1)), this protein is D-aminoacyl-tRNA deacylase.